Consider the following 483-residue polypeptide: GDP-fucose protein O-fucosyltransferase 4 (483 aa).

Methionine 1 is a topological domain (cytoplasmic). Residues 2-21 (ALCLWLFLVLPICCWCQGAV) traverse the membrane as a helical; Signal-anchor for type II membrane protein segment. Topologically, residues 22–483 (DLGDSGVFQP…RARGLSNDSR (462 aa)) are lumenal. Asparagine 151 and asparagine 303 each carry an N-linked (GlcNAc...) asparagine glycan. Cysteine 374 and cysteine 377 are joined by a disulfide. The segment at 387-425 (RKAHRKNPKQNQPPQPKMANSSHMGCPLPSPGYGPVENV) is disordered. N-linked (GlcNAc...) asparagine glycosylation is found at asparagine 406, asparagine 428, asparagine 456, and asparagine 480.

It belongs to the glycosyltransferase 10 family.

It is found in the endoplasmic reticulum membrane. The catalysed reaction is L-threonyl-[protein] + GDP-beta-L-fucose = 3-O-(alpha-L-fucosyl)-L-threonyl-[protein] + GDP + H(+). It carries out the reaction L-seryl-[protein] + GDP-beta-L-fucose = 3-O-(alpha-L-fucosyl)-L-seryl-[protein] + GDP + H(+). The protein operates within protein modification; protein glycosylation. Functionally, protein O-fucosyltransferase that specifically catalyzes O-fucosylation of serine or threonine residues in EMI domains of target proteins. Attaches fucose through an O-glycosidic linkage. O-fucosylation of EMI domain-containing proteins may be required for facilitating protein folding and secretion. In Danio rerio (Zebrafish), this protein is GDP-fucose protein O-fucosyltransferase 4 (fut11).